Here is a 346-residue protein sequence, read N- to C-terminus: Aspartate-semialdehyde dehydrogenase (346 aa).

NADP(+) is bound by residues 13–16 and 41–42; these read TGAV and RS. Phosphoserine is present on S98. R101 lines the phosphate pocket. Residue C130 is the Acyl-thioester intermediate of the active site. Y146 carries the post-translational modification Phosphotyrosine. Q157 provides a ligand contact to substrate. 160–161 is an NADP(+) binding site; sequence SG. K221 serves as a coordination point for phosphate. Substrate is bound at residue R243. The active-site Proton acceptor is H250. NADP(+) is bound at residue N324.

The protein belongs to the aspartate-semialdehyde dehydrogenase family. As to quaternary structure, homodimer.

The catalysed reaction is L-aspartate 4-semialdehyde + phosphate + NADP(+) = 4-phospho-L-aspartate + NADPH + H(+). The protein operates within amino-acid biosynthesis; L-lysine biosynthesis via DAP pathway; (S)-tetrahydrodipicolinate from L-aspartate: step 2/4. It functions in the pathway amino-acid biosynthesis; L-methionine biosynthesis via de novo pathway; L-homoserine from L-aspartate: step 2/3. Its pathway is amino-acid biosynthesis; L-threonine biosynthesis; L-threonine from L-aspartate: step 2/5. Its function is as follows. Catalyzes the NADPH-dependent formation of L-aspartate-semialdehyde (L-ASA) by the reductive dephosphorylation of L-aspartyl-4-phosphate. The chain is Aspartate-semialdehyde dehydrogenase from Bacillus subtilis (strain 168).